The chain runs to 452 residues: Bone morphogenetic protein 5 (452 aa).

Positions 1–25 (MHWTVFLLRGIVGFLWSGWVQVGYA) are cleaved as a signal peptide. Positions 26 to 314 (KGGLGDNHVH…ASEVLLRSVR (289 aa)) are excised as a propeptide. Residues Asn-209, Asn-325, Asn-343, and Asn-393 are each glycosylated (N-linked (GlcNAc...) asparagine). A disordered region spans residues 316–345 (ASKRKNQNRNKSNSHQDPSRMPSAGDYNTS). Disulfide bonds link Cys-351–Cys-417, Cys-380–Cys-449, and Cys-384–Cys-451.

It belongs to the TGF-beta family. In terms of assembly, interacts with ERFE; the interaction inhibits BMP-induced transcription of HAMP.

It localises to the secreted. Growth factor of the TGF-beta superfamily that plays essential roles in many developmental processes, including cartilage and bone formation or neurogenesis. Initiates the canonical BMP signaling cascade by associating with type I receptor BMPR1A and type II receptor BMPR2. In turn, BMPR1A propagates signal by phosphorylating SMAD1/5/8 that travel to the nucleus and act as activators and repressors of transcription of target genes. Can also signal through non-canonical pathway such as MAPK p38 signaling cascade to promote chondrogenic differentiation. Promotes the expression of HAMP, this is repressed by its interaction with ERFE. This Mus musculus (Mouse) protein is Bone morphogenetic protein 5 (Bmp5).